The sequence spans 257 residues: Nuclear receptor subfamily 0 group B member 2 (257 aa).

Residues 16–257 (SRPAILYALL…GLLGDMLLLR (242 aa)) enclose the NR LBD domain. Arg-57 carries the post-translational modification Symmetric dimethylarginine; by PRMT5.

This sequence belongs to the nuclear hormone receptor family. NR0 subfamily. In terms of assembly, interacts (via N-terminus) with NEUROD1 (via N-terminus and C-terminus). Interacts with ID2. Interacts with RORG, NFIL3, NR1D1 and BHLHE41. Heterodimer; efficient DNA binding requires dimerization with another bHLH protein. Interacts with RARA, RXRA, THRB, NR5A1, NR5A2, NR1I3, PPARA, PPARG and EID1. Interacts with HNF4A; the resulting heterodimer is transcriptionally inactive. Interacts with DDX3X; this interaction disrupts the interaction between HNF4 and NR0B2/SHP that forms inactive heterodimers and enhances the formation of active HNF4 homodimers. Arginine methylation by PRMT5 enhances repression activity of metabolic genes in liver in response to bile acid signaling, by increasing interaction with cofactors. Liver. Low levels of expression were detected in heart and pancreas.

It localises to the nucleus. It is found in the cytoplasm. Functionally, transcriptional regulator that acts as a negative regulator of receptor-dependent signaling pathways. Specifically inhibits transactivation of the nuclear receptor with which it interacts. Inhibits transcriptional activity of NEUROD1 on E-box-containing promoter by interfering with the coactivation function of the p300/CBP-mediated transcription complex for NEUROD1. Essential component of the liver circadian clock which via its interaction with NR1D1 and RORG regulates NPAS2-mediated hepatic lipid metabolism. Regulates the circadian expression of cytochrome P450 (CYP) enzymes. Represses: NR5A2 and HNF4A to down-regulate CYP2C38, NFLI3 to up-regulate CYP2A5, BHLHE41/HNF1A axis to up-regulate CYP1A2, CYP2E1 and CYP3A11, and NR1D1 to up-regulate CYP2B10, CYP4A10 and CYP4A14. This chain is Nuclear receptor subfamily 0 group B member 2 (NR0B2), found in Homo sapiens (Human).